Here is a 365-residue protein sequence, read N- to C-terminus: Glycerol dehydrogenase (365 aa).

Asp37, Gly94, Lys95, Thr116, and Ser119 together coordinate NAD(+). Position 121 (Asp121) interacts with glycerol. NAD(+)-binding residues include Ser125, Leu127, and Tyr131. Residues Asp171, His254, and His271 each contribute to the Mn(2+) site. Position 254 (His254) interacts with glycerol.

It belongs to the iron-containing alcohol dehydrogenase family. In terms of assembly, homohexamer. It depends on Mn(2+) as a cofactor.

It carries out the reaction glycerol + NAD(+) = dihydroxyacetone + NADH + H(+). The catalysed reaction is hydroxyacetone + NADH + H(+) = (S)-propane-1,2-diol + NAD(+). The protein operates within polyol metabolism; glycerol fermentation; glycerone phosphate from glycerol (oxidative route): step 1/2. With respect to regulation, inhibited by zinc. Catalyzes the NAD-dependent oxidation of glycerol to dihydroxyacetone (glycerone). Allows microorganisms to utilize glycerol as a source of carbon under anaerobic conditions. Exhibits a rather broad substrate specificity since it can also oxidize 1,2-propanediol and 2,3-butanediol and reduce dihydroxyacetone. Cannot use NADP(+) as an electron acceptor for the oxidation of glycerol. The polypeptide is Glycerol dehydrogenase (Citrobacter freundii).